We begin with the raw amino-acid sequence, 323 residues long: Beta-ketoacyl-[acyl-carrier-protein] synthase III (323 aa).

Residues Cys-114 and His-250 contribute to the active site. The ACP-binding stretch occupies residues Gln-251 to Arg-255. Asn-280 is an active-site residue.

The protein belongs to the thiolase-like superfamily. FabH family. As to quaternary structure, homodimer.

The protein localises to the cytoplasm. The enzyme catalyses malonyl-[ACP] + acetyl-CoA + H(+) = 3-oxobutanoyl-[ACP] + CO2 + CoA. It participates in lipid metabolism; fatty acid biosynthesis. Its function is as follows. Catalyzes the condensation reaction of fatty acid synthesis by the addition to an acyl acceptor of two carbons from malonyl-ACP. Catalyzes the first condensation reaction which initiates fatty acid synthesis and may therefore play a role in governing the total rate of fatty acid production. Possesses both acetoacetyl-ACP synthase and acetyl transacylase activities. Its substrate specificity determines the biosynthesis of branched-chain and/or straight-chain of fatty acids. This is Beta-ketoacyl-[acyl-carrier-protein] synthase III from Alkalilimnicola ehrlichii (strain ATCC BAA-1101 / DSM 17681 / MLHE-1).